We begin with the raw amino-acid sequence, 369 residues long: Anhydro-N-acetylmuramic acid kinase (369 aa).

9–16 (GTSLDAVD) serves as a coordination point for ATP.

It belongs to the anhydro-N-acetylmuramic acid kinase family.

It catalyses the reaction 1,6-anhydro-N-acetyl-beta-muramate + ATP + H2O = N-acetyl-D-muramate 6-phosphate + ADP + H(+). The protein operates within amino-sugar metabolism; 1,6-anhydro-N-acetylmuramate degradation. Its pathway is cell wall biogenesis; peptidoglycan recycling. Functionally, catalyzes the specific phosphorylation of 1,6-anhydro-N-acetylmuramic acid (anhMurNAc) with the simultaneous cleavage of the 1,6-anhydro ring, generating MurNAc-6-P. Is required for the utilization of anhMurNAc either imported from the medium or derived from its own cell wall murein, and thus plays a role in cell wall recycling. The polypeptide is Anhydro-N-acetylmuramic acid kinase (Phenylobacterium zucineum (strain HLK1)).